The primary structure comprises 360 residues: Mannitol-1-phosphate 5-dehydrogenase (360 aa).

6–17 is a binding site for NAD(+); sequence ALHFGAGNIGRG.

It belongs to the mannitol dehydrogenase family.

It catalyses the reaction D-mannitol 1-phosphate + NAD(+) = beta-D-fructose 6-phosphate + NADH + H(+). The polypeptide is Mannitol-1-phosphate 5-dehydrogenase (Mycoplasmopsis pulmonis (strain UAB CTIP) (Mycoplasma pulmonis)).